A 206-amino-acid chain; its full sequence is uncharacterized protein (206 aa).

The tract at residues 81–132 (EEQQQQQHHVHGPGCSHGHHHDSHANDGHHDEHHDEHHDHVNPDDVEDEFPR) is disordered. Residues 82–96 (EQQQQQHHVHGPGCS) show a composition bias toward low complexity. Positions 103 to 123 (SHANDGHHDEHHDEHHDHVNP) are enriched in basic and acidic residues. Residues 150–166 (YLTALCLLPIIGSLFSI) form a helical membrane-spanning segment.

Its subcellular location is the membrane. This is an uncharacterized protein from Dictyostelium discoideum (Social amoeba).